A 500-amino-acid chain; its full sequence is Neuronal acetylcholine receptor subunit beta-2 (500 aa).

The first 24 residues, 1-24 (MAGHSNSMALFSFSLLWLCSGVLG), serve as a signal peptide directing secretion. Residues 25-237 (TDTEERLVEH…IIRRKPLFYT (213 aa)) lie on the Extracellular side of the membrane. Residues N50 and N167 are each glycosylated (N-linked (GlcNAc...) asparagine). C154 and C168 are oxidised to a cystine. A helical transmembrane segment spans residues 238–258 (INLIIPCVLITSLAILVFYLP). Residues 259–266 (SDCGEKMT) lie on the Cytoplasmic side of the membrane. Residues 267–287 (LCISVLLALTVFLLLISKIVP) traverse the membrane as a helical segment. The Extracellular segment spans residues 288–299 (PTSLDVPLVGKY). A helical transmembrane segment spans residues 300–320 (LMFTMVLVTFSIVTSVCVLNV). At 321-458 (HHRSPTTHTM…WKYVAMVIDR (138 aa)) the chain is on the cytoplasmic side. The helical transmembrane segment at 459 to 479 (LFLWIFVFVCVFGTVGMFLQP) threads the bilayer.

It belongs to the ligand-gated ion channel (TC 1.A.9) family. Acetylcholine receptor (TC 1.A.9.1) subfamily. Beta-2/CHRNB2 sub-subfamily. As to quaternary structure, neuronal AChR is a heteropentamer composed of two different types of subunits: alpha and beta. CHRNB2/Beta-2 subunit can be combined to CHRNA2/alpha-2, CHRNA3/alpha-3 or CHRNA4/alpha-4, CHRNA5/alpha-5, CHRNA6/alpha-6 and CHRNB3/beta-3 to give rise to functional receptors. CHRNA2:CHRNB2 and CHRNA4:CHRNB2 nAChR complexes exist in two subtypes: LS (low agonist sensitivity) with a (CHRNA2/4)3:(CHRNB2)2 and HS (high agonist sensitivity) with a (CHRNA2/4)2:(CHRNB2)3 stoichiometry; the subtypes differ in their subunit binding interfaces which are involved in ligand binding. Cells produce predominantly an (CHRNA4)3:(CHRNB2)2 nAChR. The stoichiometric form (CHRNA4)2:(CHRNB2)3 expression is selectively up-regulated by nicotine and has lower single channel conductance and calcium permeability. Also part of the stoichiometric forms: (CHRNA4:CHRNB2)2:CHRNB3 or (CHRNA6:CHRNB2)2:CHRNB3. Can form heteropentamers with CHRNA7, mainly found in basal forebrain cholinergic neurons. Interacts with RIC3; which is required for proper folding and assembly. Interacts with LYPD6. Expressed in most regions of the CNS.

It localises to the synaptic cell membrane. It is found in the cell membrane. The catalysed reaction is Ca(2+)(in) = Ca(2+)(out). It catalyses the reaction K(+)(in) = K(+)(out). It carries out the reaction Na(+)(in) = Na(+)(out). Its activity is regulated as follows. Activated by a myriad of ligands such as acetylcholine, cytisine, nicotine, choline and epibatidine. Channel potentiation by calcium is stoichiometry-selective, CHRNA4:CHRNB2 nACh receptor is achieved by calcium association with topographically distinct sites framed by anionic residues within the CHRNA4 subunit and between the CHRNA4 and CHRNB2 subunits. Oligomeric amyloid-beta protein 42 activates specifially CHRNA7:CHRNB2 nAchRs. nAChR activity is inhibited by the antagonist alpha-conotoxins BuIA, PnIA, PnIC, GID and MII, small disulfide-constrained peptides from cone snails. Component of neuronal acetylcholine receptors (nAChRs) that function as pentameric, ligand-gated cation channels with high calcium permeability among other activities. nAChRs are excitatory neurotrasnmitter receptors formed by a collection of nAChR subunits known to mediate synaptic transmission in the nervous system and the neuromuscular junction. Each nAchR subunit confers differential attributes to channel properties, including activation, deactivation and desensitization kinetics, pH sensitivity, cation permeability, and binding to allosteric modulators. CHRNB2 forms heteropentameric neuronal acetylcholine receptors with CHRNA2, CHRNA3, CHRNA4 and CHRNA6, as well as CHRNA5 and CHRNB3 as accesory subunits. Found in two major stoichiometric forms,(CHRNA4)3:(CHRNB2)2 and (CHRNA4)2:(CHRNB2)3, the two stoichiometric forms differ in their unitary conductance, calcium permeability, ACh sensitivity and potentiation by divalent cation. Heteropentameric channels with CHRNA6 and CHRNA4 exhibit high sensitivity to ACh and nicotine and are predominantly expressed in only a few brain areas, including dopaminergic neurons, norepirephrine neurons and cells of the visual system. nAChrs containing CHRNA6 subunits mediate endogenous cholinergic modulation of dopamine and gamma-aminobutyric acid (GABA) release in response to nicotine at nerve terminals. Also forms functional nAChRs with other subunits such as CHRNA7:CHRNB2, mainly expressed in basal forebrain cholinergic neurons. The chain is Neuronal acetylcholine receptor subunit beta-2 (Chrnb2) from Rattus norvegicus (Rat).